A 94-amino-acid chain; its full sequence is Sucrose operon repressor (94 aa).

The region spanning methionine 1–glutamate 56 is the HTH lacI-type domain. Residues leucine 4–asparagine 23 constitute a DNA-binding region (H-T-H motif).

In terms of biological role, repressor for the scr operon. Binds D-fructose as an inducer. The sequence is that of Sucrose operon repressor (scrR) from Vibrio alginolyticus.